A 329-amino-acid chain; its full sequence is Phosphate acyltransferase (329 aa).

The protein belongs to the PlsX family. In terms of assembly, homodimer. Probably interacts with PlsY.

The protein localises to the cytoplasm. The enzyme catalyses a fatty acyl-[ACP] + phosphate = an acyl phosphate + holo-[ACP]. Its pathway is lipid metabolism; phospholipid metabolism. In terms of biological role, catalyzes the reversible formation of acyl-phosphate (acyl-PO(4)) from acyl-[acyl-carrier-protein] (acyl-ACP). This enzyme utilizes acyl-ACP as fatty acyl donor, but not acyl-CoA. The chain is Phosphate acyltransferase from Exiguobacterium sp. (strain ATCC BAA-1283 / AT1b).